Consider the following 400-residue polypeptide: Acetate kinase (400 aa).

N10 contributes to the Mg(2+) binding site. K17 is a binding site for ATP. R91 serves as a coordination point for substrate. D150 acts as the Proton donor/acceptor in catalysis. ATP-binding positions include 210–214, 285–287, and 333–337; these read HLGNG, DCR, and GIGEN. E387 is a Mg(2+) binding site.

Belongs to the acetokinase family. Homodimer. Mg(2+) is required as a cofactor. It depends on Mn(2+) as a cofactor.

Its subcellular location is the cytoplasm. The enzyme catalyses acetate + ATP = acetyl phosphate + ADP. Its pathway is metabolic intermediate biosynthesis; acetyl-CoA biosynthesis; acetyl-CoA from acetate: step 1/2. In terms of biological role, catalyzes the formation of acetyl phosphate from acetate and ATP. Can also catalyze the reverse reaction. This Salmonella typhi protein is Acetate kinase.